Reading from the N-terminus, the 281-residue chain is CCAAT/enhancer-binding protein epsilon (281 aa).

A disordered region spans residues 1 to 30 (MSHGTYYECEPRGGQQPLEFSGGRAGPGEL). Lys-121 is covalently cross-linked (Glycyl lysine isopeptide (Lys-Gly) (interchain with G-Cter in SUMO2)). Ser-181 bears the Phosphoserine mark. Positions 204–267 (SLEYRLRRER…DTLRNLFRQI (64 aa)) constitute a bZIP domain. The tract at residues 208–245 (RLRRERNNIAVRKSRDKAKRRIMETQQKVLEYMAENER) is basic motif. Positions 246–267 (LRSRVDQLTQELDTLRNLFRQI) are leucine-zipper.

It belongs to the bZIP family. C/EBP subfamily. In terms of assembly, binds DNA as a homodimer and as a heterodimer. Can form stable heterodimers with CEBPA, CEBPB and CEBPD. Interacts with GATA1 and SPI1. Interacts with SMARCD2.

The protein localises to the nucleus. Transcriptional activator. C/EBP are DNA-binding proteins that recognize two different motifs: the CCAAT homology common to many promoters and the enhanced core homology common to many enhancers. Required for the promyelocyte-myelocyte transition in myeloid differentiation. This is CCAAT/enhancer-binding protein epsilon (Cebpe) from Rattus norvegicus (Rat).